Reading from the N-terminus, the 828-residue chain is Glycerol-3-phosphate acyltransferase (828 aa).

The short motif at 309–314 is the HXXXXD motif element; the sequence is CHRSHI.

Belongs to the GPAT/DAPAT family.

The protein localises to the cell inner membrane. It catalyses the reaction sn-glycerol 3-phosphate + an acyl-CoA = a 1-acyl-sn-glycero-3-phosphate + CoA. It participates in phospholipid metabolism; CDP-diacylglycerol biosynthesis; CDP-diacylglycerol from sn-glycerol 3-phosphate: step 1/3. The polypeptide is Glycerol-3-phosphate acyltransferase (Pseudomonas entomophila (strain L48)).